Consider the following 168-residue polypeptide: Peptidoglycan-associated lipoprotein (168 aa).

Positions 1–24 are cleaved as a signal peptide; it reads MRRIQSIARSPIAIALFMSLAVAG. The N-palmitoyl cysteine moiety is linked to residue Cys25. A lipid anchor (S-diacylglycerol cysteine) is attached at Cys25. Residues 51–167 enclose the OmpA-like domain; the sequence is QDFTVNVGDR…RAVTVLNGAG (117 aa).

This sequence belongs to the Pal lipoprotein family. As to quaternary structure, the Tol-Pal system is composed of five core proteins: the inner membrane proteins TolA, TolQ and TolR, the periplasmic protein TolB and the outer membrane protein Pal. They form a network linking the inner and outer membranes and the peptidoglycan layer. The N-terminus is blocked.

It localises to the cell outer membrane. Functionally, part of the Tol-Pal system, which plays a role in outer membrane invagination during cell division and is important for maintaining outer membrane integrity. This Brucella abortus biovar 1 (strain 9-941) protein is Peptidoglycan-associated lipoprotein.